The primary structure comprises 203 residues: Ras-like protein family member 10A (203 aa).

The small GTPase-like stretch occupies residues M1–M203. G11–T18 lines the GTP pocket. The Effector region motif lies at H33–Y42. GTP-binding positions include D59–V62 and N129–D132. A Cysteine methyl ester modification is found at C200. C200 carries the S-farnesyl cysteine lipid modification. The propeptide at S201 to M203 is removed in mature form.

This sequence belongs to the small GTPase superfamily. Ras family. Isoprenylation is essential for nucleolar localization, and the proliferation-inhibiting activity of RASL10A.

It localises to the cell membrane. Its subcellular location is the nucleus. The protein resides in the nucleolus. It carries out the reaction GTP + H2O = GDP + phosphate + H(+). Functionally, potent inhibitor of cellular proliferation. This chain is Ras-like protein family member 10A (Rasl10a), found in Mus musculus (Mouse).